The sequence spans 169 residues: Lipoprotein signal peptidase (169 aa).

Over 1–9 (MPDVDRFGR) the chain is Cytoplasmic. The helical transmembrane segment at 10 to 30 (LPWLWITVLVFVLDQVSKAFF) threads the bilayer. Over 31–67 (QAELSMYQQIVVIPDLFSWTLAYNTGAAFSFLADSSG) the chain is Periplasmic. A helical transmembrane segment spans residues 68–89 (WQRWLFALIAIVVSASLVVWLK). Over 90-96 (RLKKGET) the chain is Cytoplasmic. Residues 97–118 (WLAIALALVLGGALGNLYDRMV) traverse the membrane as a helical segment. The Periplasmic portion of the chain corresponds to 119 to 140 (LGHVVDFILVHWQNRWYFPAFN). Active-site residues include Asp124 and Asp143. The helical transmembrane segment at 141–154 (LADSAITVGAVMLA) threads the bilayer. Residues 155–169 (LDMFRSKKSGEAAHG) lie on the Cytoplasmic side of the membrane.

The protein belongs to the peptidase A8 family. Monomer in the crystal.

It is found in the cell inner membrane. The enzyme catalyses Release of signal peptides from bacterial membrane prolipoproteins. Hydrolyzes -Xaa-Yaa-Zaa-|-(S,diacylglyceryl)Cys-, in which Xaa is hydrophobic (preferably Leu), and Yaa (Ala or Ser) and Zaa (Gly or Ala) have small, neutral side chains.. It functions in the pathway protein modification; lipoprotein biosynthesis (signal peptide cleavage). Its activity is regulated as follows. Inhibited by globomycin. This protein specifically catalyzes the removal of signal peptides from prolipoproteins. The protein is Lipoprotein signal peptidase of Pseudomonas aeruginosa (strain ATCC 15692 / DSM 22644 / CIP 104116 / JCM 14847 / LMG 12228 / 1C / PRS 101 / PAO1).